The following is a 152-amino-acid chain: SsrA-binding protein (152 aa).

Belongs to the SmpB family.

It is found in the cytoplasm. Functionally, required for rescue of stalled ribosomes mediated by trans-translation. Binds to transfer-messenger RNA (tmRNA), required for stable association of tmRNA with ribosomes. tmRNA and SmpB together mimic tRNA shape, replacing the anticodon stem-loop with SmpB. tmRNA is encoded by the ssrA gene; the 2 termini fold to resemble tRNA(Ala) and it encodes a 'tag peptide', a short internal open reading frame. During trans-translation Ala-aminoacylated tmRNA acts like a tRNA, entering the A-site of stalled ribosomes, displacing the stalled mRNA. The ribosome then switches to translate the ORF on the tmRNA; the nascent peptide is terminated with the 'tag peptide' encoded by the tmRNA and targeted for degradation. The ribosome is freed to recommence translation, which seems to be the essential function of trans-translation. The protein is SsrA-binding protein of Rickettsia africae (strain ESF-5).